Reading from the N-terminus, the 451-residue chain is Ubiquitin hydrolase B (451 aa).

The USP domain occupies 19–450 (RGLINTSNTC…EAYLLLYQLV (432 aa)). Positions 83-115 (NNSNSTTTTSSSSTTATTTSTSNNNKSQTPTSP) are enriched in low complexity. The segment at 83–154 (NNSNSTTTTS…PPINPKHFND (72 aa)) is disordered. Positions 116–135 (IQQHHQSQTNGLSNQPSVAT) are enriched in polar residues. Histidine 399 (nucleophile) is an active-site residue. Histidine 408 serves as the catalytic Proton acceptor.

The protein belongs to the peptidase C19 family. Interacts with mkkA (via F-box/WD40 domains).

The catalysed reaction is Thiol-dependent hydrolysis of ester, thioester, amide, peptide and isopeptide bonds formed by the C-terminal Gly of ubiquitin (a 76-residue protein attached to proteins as an intracellular targeting signal).. Functionally, required for proper prespore cell patterning. Plays a role in stabilizing mkkA by preventing it from being targeted for degradation. ubcB and ubpB differentially control ubiquitination/deubiquitination and degradation of mkkA in a cell-type-specific and temporally regulated manner. The protein is Ubiquitin hydrolase B (ubpB) of Dictyostelium discoideum (Social amoeba).